A 471-amino-acid polypeptide reads, in one-letter code: Ribulose bisphosphate carboxylase large chain (471 aa).

Residue lysine 5 is modified to N6,N6,N6-trimethyllysine. Residues asparagine 114 and threonine 164 each coordinate substrate. Lysine 166 acts as the Proton acceptor in catalysis. Lysine 168 contacts substrate. The Mg(2+) site is built by lysine 192, aspartate 194, and glutamate 195. The residue at position 192 (lysine 192) is an N6-carboxylysine. Histidine 285 serves as the catalytic Proton acceptor. 3 residues coordinate substrate: arginine 286, histidine 318, and serine 370.

This sequence belongs to the RuBisCO large chain family. Type I subfamily. Heterohexadecamer of 8 large chains and 8 small chains; disulfide-linked. The disulfide link is formed within the large subunit homodimers. Requires Mg(2+) as cofactor. Post-translationally, the disulfide bond which can form in the large chain dimeric partners within the hexadecamer appears to be associated with oxidative stress and protein turnover.

It localises to the plastid. The protein localises to the chloroplast. The catalysed reaction is 2 (2R)-3-phosphoglycerate + 2 H(+) = D-ribulose 1,5-bisphosphate + CO2 + H2O. The enzyme catalyses D-ribulose 1,5-bisphosphate + O2 = 2-phosphoglycolate + (2R)-3-phosphoglycerate + 2 H(+). Its function is as follows. RuBisCO catalyzes two reactions: the carboxylation of D-ribulose 1,5-bisphosphate, the primary event in carbon dioxide fixation, as well as the oxidative fragmentation of the pentose substrate in the photorespiration process. Both reactions occur simultaneously and in competition at the same active site. The protein is Ribulose bisphosphate carboxylase large chain of Strychnos nux-vomica (Poison nut).